The sequence spans 480 residues: Glycogen synthase (480 aa).

Residue Lys-15 participates in ADP-alpha-D-glucose binding.

This sequence belongs to the glycosyltransferase 1 family. Bacterial/plant glycogen synthase subfamily.

The enzyme catalyses [(1-&gt;4)-alpha-D-glucosyl](n) + ADP-alpha-D-glucose = [(1-&gt;4)-alpha-D-glucosyl](n+1) + ADP + H(+). It functions in the pathway glycan biosynthesis; glycogen biosynthesis. In terms of biological role, synthesizes alpha-1,4-glucan chains using ADP-glucose. This Rhizobium tropici protein is Glycogen synthase.